The chain runs to 1010 residues: Collagen, type I, alpha 1b (1010 aa).

Pro residues predominate over residues 1–24 (SSGPPQPGPMGPMGPRGPPGPPGS). Residues 1-969 (SSGPPQPGPM…PDGTQKSPAR (969 aa)) form a disordered region. Over residues 25 to 48 (SGPQGFTGPPGEPGEPGASGAMGS) the composition is skewed to low complexity. Basic and acidic residues predominate over residues 58–72 (NGDDGEPGKPGRPGE). Over residues 73–82 (RGAAGPQGAR) the composition is skewed to low complexity. The span at 145–159 (GGPPGPTGPAGPPGF) shows a compositional bias: pro residues. Gly residues-rich tracts occupy residues 160-179 (PGGAGVKGETGPAGGRGNEG) and 203-212 (GTDGGPGAKG). 2 stretches are compositionally biased toward low complexity: residues 213–268 (SPGA…PGPA) and 300–310 (ERGAPGARGFP). Residues 311-323 (GADGGAGGKGAPG) show a composition bias toward gly residues. 2 stretches are compositionally biased toward low complexity: residues 324–343 (ERGATGESGSPGAPGAPGSK) and 405–448 (PAGA…APGE). Composition is skewed to gly residues over residues 468 to 477 (GAPGLGGPTG), 486 to 495 (GAPGGLGAPG), and 519 to 528 (GGKGGDGAPG). 2 stretches are compositionally biased toward low complexity: residues 559–568 (VAGPTGPRGA) and 581–596 (AGFAGPPGADGQPGAK). Gly residues-rich tracts occupy residues 609–618 (GAPGPGGPVG) and 633–642 (GARGGAGPPG). 3 stretches are compositionally biased toward low complexity: residues 643-662 (ATGFPGPAGRVGPSGPAGAA), 679-701 (ETGAAGRPGEAGAAGAPGPSGEK), and 796-805 (APGAVGPSGK). Positions 834-847 (KGDRGEAGEAGDRG) are enriched in basic and acidic residues. Over residues 872–900 (PAGASGPAGPRGPAGSNGAAGKDGMNGLP) the composition is skewed to low complexity. Residues 918–933 (AGPPGPPGPAGPPGPP) are compositionally biased toward pro residues. Residues 982 to 1010 (RLPLLDLAPMDVGAPDQEFGVEVGPVCFL) form the Fibrillar collagen NC1 domain.

It belongs to the fibrillar collagen family.

Its subcellular location is the secreted. The protein localises to the extracellular space. The protein resides in the extracellular matrix. The protein is Collagen, type I, alpha 1b of Epinephelus marginatus (Dusky grouper).